We begin with the raw amino-acid sequence, 335 residues long: Phosphate acyltransferase (335 aa).

The protein belongs to the PlsX family. As to quaternary structure, homodimer. Probably interacts with PlsY.

It is found in the cytoplasm. The enzyme catalyses a fatty acyl-[ACP] + phosphate = an acyl phosphate + holo-[ACP]. It functions in the pathway lipid metabolism; phospholipid metabolism. In terms of biological role, catalyzes the reversible formation of acyl-phosphate (acyl-PO(4)) from acyl-[acyl-carrier-protein] (acyl-ACP). This enzyme utilizes acyl-ACP as fatty acyl donor, but not acyl-CoA. The polypeptide is Phosphate acyltransferase (Streptococcus pyogenes serotype M6 (strain ATCC BAA-946 / MGAS10394)).